The primary structure comprises 104 residues: Pyrimidine/purine nucleoside phosphorylase (104 aa).

The protein belongs to the nucleoside phosphorylase PpnP family.

The catalysed reaction is a purine D-ribonucleoside + phosphate = a purine nucleobase + alpha-D-ribose 1-phosphate. The enzyme catalyses adenosine + phosphate = alpha-D-ribose 1-phosphate + adenine. It carries out the reaction cytidine + phosphate = cytosine + alpha-D-ribose 1-phosphate. It catalyses the reaction guanosine + phosphate = alpha-D-ribose 1-phosphate + guanine. The catalysed reaction is inosine + phosphate = alpha-D-ribose 1-phosphate + hypoxanthine. The enzyme catalyses thymidine + phosphate = 2-deoxy-alpha-D-ribose 1-phosphate + thymine. It carries out the reaction uridine + phosphate = alpha-D-ribose 1-phosphate + uracil. It catalyses the reaction xanthosine + phosphate = alpha-D-ribose 1-phosphate + xanthine. In terms of biological role, catalyzes the phosphorolysis of diverse nucleosides, yielding D-ribose 1-phosphate and the respective free bases. Can use uridine, adenosine, guanosine, cytidine, thymidine, inosine and xanthosine as substrates. Also catalyzes the reverse reactions. This is Pyrimidine/purine nucleoside phosphorylase from Pelobacter propionicus (strain DSM 2379 / NBRC 103807 / OttBd1).